Here is a 150-residue protein sequence, read N- to C-terminus: Large ribosomal subunit protein bL9 (150 aa).

This sequence belongs to the bacterial ribosomal protein bL9 family.

Its function is as follows. Binds to the 23S rRNA. The chain is Large ribosomal subunit protein bL9 from Pseudoalteromonas translucida (strain TAC 125).